A 282-amino-acid chain; its full sequence is Phosphate import ATP-binding protein PstB (282 aa).

In terms of domain architecture, ABC transporter spans 36 to 277 (IEVKNLNFFY…PARKETEDYI (242 aa)). Residue 68–75 (GPSGCGKS) participates in ATP binding.

This sequence belongs to the ABC transporter superfamily. Phosphate importer (TC 3.A.1.7) family. As to quaternary structure, the complex is composed of two ATP-binding proteins (PstB), two transmembrane proteins (PstC and PstA) and a solute-binding protein (PstS).

The protein resides in the cell inner membrane. It carries out the reaction phosphate(out) + ATP + H2O = ADP + 2 phosphate(in) + H(+). Functionally, part of the ABC transporter complex PstSACB involved in phosphate import. Responsible for energy coupling to the transport system. This chain is Phosphate import ATP-binding protein PstB, found in Burkholderia pseudomallei (strain 1710b).